Here is a 90-residue protein sequence, read N- to C-terminus: Probable Fe(2+)-trafficking protein (90 aa).

The protein belongs to the Fe(2+)-trafficking protein family.

Could be a mediator in iron transactions between iron acquisition and iron-requiring processes, such as synthesis and/or repair of Fe-S clusters in biosynthetic enzymes. This Nitrosomonas europaea (strain ATCC 19718 / CIP 103999 / KCTC 2705 / NBRC 14298) protein is Probable Fe(2+)-trafficking protein.